Here is a 736-residue protein sequence, read N- to C-terminus: DNA topoisomerase 4 subunit A (736 aa).

The Topo IIA-type catalytic domain maps to 32-496 (LPDVRDGLKP…SFEQVTLTNQ (465 aa)). The active-site O-(5'-phospho-DNA)-tyrosine intermediate is the Y120.

The protein belongs to the type II topoisomerase GyrA/ParC subunit family. ParC type 1 subfamily. As to quaternary structure, heterotetramer composed of ParC and ParE.

It is found in the cell membrane. The enzyme catalyses ATP-dependent breakage, passage and rejoining of double-stranded DNA.. Topoisomerase IV is essential for chromosome segregation. It relaxes supercoiled DNA. Performs the decatenation events required during the replication of a circular DNA molecule. In Rickettsia bellii (strain RML369-C), this protein is DNA topoisomerase 4 subunit A.